Here is a 292-residue protein sequence, read N- to C-terminus: Proteasome subunit beta (292 aa).

Residues M1–G62 constitute a propeptide, removed in mature form; by autocatalysis. Catalysis depends on T63, which acts as the Nucleophile.

It belongs to the peptidase T1B family. As to quaternary structure, the 20S proteasome core is composed of 14 alpha and 14 beta subunits that assemble into four stacked heptameric rings, resulting in a barrel-shaped structure. The two inner rings, each composed of seven catalytic beta subunits, are sandwiched by two outer rings, each composed of seven alpha subunits. The catalytic chamber with the active sites is on the inside of the barrel. Has a gated structure, the ends of the cylinder being occluded by the N-termini of the alpha-subunits. Is capped by the proteasome-associated ATPase, ARC.

It localises to the cytoplasm. It catalyses the reaction Cleavage of peptide bonds with very broad specificity.. It participates in protein degradation; proteasomal Pup-dependent pathway. Its activity is regulated as follows. The formation of the proteasomal ATPase ARC-20S proteasome complex, likely via the docking of the C-termini of ARC into the intersubunit pockets in the alpha-rings, may trigger opening of the gate for substrate entry. Interconversion between the open-gate and close-gate conformations leads to a dynamic regulation of the 20S proteasome proteolysis activity. Its function is as follows. Component of the proteasome core, a large protease complex with broad specificity involved in protein degradation. The polypeptide is Proteasome subunit beta (Gordonia bronchialis (strain ATCC 25592 / DSM 43247 / BCRC 13721 / JCM 3198 / KCTC 3076 / NBRC 16047 / NCTC 10667) (Rhodococcus bronchialis)).